Reading from the N-terminus, the 577-residue chain is Arginine--tRNA ligase (577 aa).

The short motif at 122-132 is the 'HIGH' region element; that stretch reads PNVAKEMHVGH.

The protein belongs to the class-I aminoacyl-tRNA synthetase family. As to quaternary structure, monomer.

The protein resides in the cytoplasm. The catalysed reaction is tRNA(Arg) + L-arginine + ATP = L-arginyl-tRNA(Arg) + AMP + diphosphate. The sequence is that of Arginine--tRNA ligase from Haemophilus influenzae (strain PittEE).